Consider the following 475-residue polypeptide: MDLFLYNTLSREKERFLPSNDPVKLYTCGPTVYDYAHIGNFRTYVFEDLLKRVLLFLGYSVHHVMNITDVDDKTLAGARKKGCSLEKYCQPYINAFFADLETLHILKADAYPHATHYIPQMIEAIQQLIDQGIAYVGQDQSVYFSISRFPNYGSLSHLNLEELRQSSRIDADEYDKDNLCDFVLWKAYDPNRDGEIFWESPFGKGRPGWHLECSIMSMALLGQSLDIHAGGVDNIFPHHENEIAQSESLSRKPFVRYWLHSHHLLVDGKKMSKSLGNFFTLRDLLQQGFSGEEVRYLLLQGHYRTQLNFTQEGLQAARQSLKRLRDFISRLEDPFYPDDIIHPEVGSACQNFLEAFVTSITNDLNISSALASLFDFIRKINGMIDRQSIQEETSSEFSKQDAQHILSLLRQIDQVLGVLPFSQADIPEDVLLLVKEREAARKVKNWKEADRLRDEIISRGFAIEDGKTGMKVKKI.

Cys28 contributes to the Zn(2+) binding site. Positions 30–40 match the 'HIGH' region motif; that stretch reads PTVYDYAHIGN. Zn(2+) contacts are provided by Cys213, His238, and Glu242. The 'KMSKS' region motif lies at 270–274; that stretch reads KMSKS. ATP is bound at residue Lys273.

This sequence belongs to the class-I aminoacyl-tRNA synthetase family. As to quaternary structure, monomer. Requires Zn(2+) as cofactor.

The protein resides in the cytoplasm. The enzyme catalyses tRNA(Cys) + L-cysteine + ATP = L-cysteinyl-tRNA(Cys) + AMP + diphosphate. In Chlamydia muridarum (strain MoPn / Nigg), this protein is Cysteine--tRNA ligase (cysS).